A 363-amino-acid polypeptide reads, in one-letter code: Ferrochelatase (363 aa).

Residues histidine 209 and glutamate 290 each contribute to the Fe cation site.

The protein belongs to the ferrochelatase family.

It localises to the cytoplasm. The catalysed reaction is heme b + 2 H(+) = protoporphyrin IX + Fe(2+). Its pathway is porphyrin-containing compound metabolism; protoheme biosynthesis; protoheme from protoporphyrin-IX: step 1/1. In terms of biological role, catalyzes the ferrous insertion into protoporphyrin IX. The polypeptide is Ferrochelatase (Methylibium petroleiphilum (strain ATCC BAA-1232 / LMG 22953 / PM1)).